The chain runs to 198 residues: Cyclin-dependent kinase inhibitor 1B (198 aa).

Residues 1–11 (MSNVRVSNGSP) show a composition bias toward polar residues. A disordered region spans residues 1–34 (MSNVRVSNGSPSLERMDARQAEHPKPSACRNLFG). Ser-10 bears the Phosphoserine; by UHMK1 mark. The segment covering 14-25 (ERMDARQAEHPK) has biased composition (basic and acidic residues). Residues 51–91 (DMEEASQRKWNFDFQNHNPLEGRYQWQEVDKGSLPEFYYRP) are interaction with CDK2. A Phosphotyrosine; by SRC modification is found at Tyr-74. The disordered stretch occupies residues 85-198 (PEFYYRPPRP…KKPGLRRHQT (114 aa)). Phosphotyrosine; by ABL, LYN and SRC is present on Tyr-88. Tyr-89 bears the Phosphotyrosine mark. Residues 104–124 (QESQDVSGSRQAVPSIGSQAY) show a composition bias toward polar residues. Positions 153–169 (KRPAADDSSSQNKRANR) match the Nuclear localization signal motif. At Thr-170 the chain carries Phosphothreonine. The segment covering 175 to 186 (SDGSLNAGSVEQ) has biased composition (polar residues). At Thr-187 the chain carries Phosphothreonine; by PKB/AKT1, CDK1 and CDK2. Residue Thr-198 is modified to Phosphothreonine; by CaMK1, PKB/AKT1, RPS6KA1, RPS6KA3 and PIM1.

It belongs to the CDI family. In terms of assembly, forms a ternary complex composed of CCNE1, CDK2 and CDKN1B. Interacts directly with CCNE1; the interaction is inhibited by CDK2-dependent phosphorylation on Thr-187. Interacts with COPS5, subunit of the COP9 signalosome complex; the interaction leads to CDKN1B degradation. Interacts with NUP50; the interaction leads to nuclear import and degradation of phosphorylated CDKN1B. Interacts with CCND1 and SNX6. Interacts (Thr-198-phosphorylated form) with 14-3-3 proteins, binds strongly YWHAQ, weakly YWHAE and YWHAH, but not YWHAB nor YWHAZ; the interaction with YWHAQ results in translocation to the cytoplasm. Interacts with AKT1 and LYN; the interactions lead to cytoplasmic mislocation, phosphorylation of CDKN1B and inhibition of cell cycle arrest. Forms a ternary complex with CCNA2 and CDK2; CDKN1B inhibits the kinase activity of CDK2 through conformational rearrangements. Interacts (unphosphorylated form) with CDK2. Forms a complex with CDK2 and SPDYA, but does not directly interact with SPDYA. Forms a ternary complex composed of cyclin D, CDK4 and CDKN1B. Interacts (phosphorylated on Tyr-88 and Tyr-89) with CDK4; the interaction is required for cyclin D and CDK4 complex assembly, induces nuclear translocation and activates the CDK4 kinase activity. Interacts with GRB2. Interacts with PIM1. Identified in a complex with SKP1, SKP2 and CKS1B. Interacts with UHMK1; the interaction leads to cytoplasmic mislocation, phosphorylation of CDKN1B and inhibition of cell cycle arrest. Also interacts with CDK1. Dephosphorylated on Thr-187 by PPM1H, leading to CDKN1B stability. Post-translationally, phosphorylated; phosphorylation occurs on serine, threonine and tyrosine residues. Phosphorylation on Ser-10 is the major site of phosphorylation in resting cells, takes place at the G(0)-G(1) phase and leads to protein stability. Phosphorylation on other sites is greatly enhanced by mitogens, growth factors, cMYC and in certain cancer cell lines. The phosphorylated form found in the cytoplasm is inactivate. Phosphorylation on Thr-198 is required for interaction with 14-3-3 proteins. Phosphorylation on Thr-187, by CDK1 and CDK2 leads to protein ubiquitination and proteasomal degradation. Tyrosine phosphorylation promotes this process. Phosphorylation by PKB/AKT1 can be suppressed by LY294002, an inhibitor of the catalytic subunit of PI3K. Phosphorylation on Tyr-88 and Tyr-89 has no effect on binding CDK2, but is required for binding CDK4. Dephosphorylated on tyrosine residues by G-CSF. Dephosphorylated on Thr-187 by PPM1H, leading to CDKN1B stability. Ubiquitinated; in the cytoplasm by the KPC complex (composed of RNF123/KPC1 and UBAC1/KPC2) and, in the nucleus, by SCF(SKP2). The latter requires prior phosphorylation on Thr-187. Ubiquitinated; by a TRIM21-containing SCF(SKP2)-like complex; leads to its degradation. In terms of processing, subject to degradation in the lysosome. Interaction with SNX6 promotes lysosomal degradation.

The protein resides in the nucleus. Its subcellular location is the cytoplasm. It localises to the endosome. Functionally, important regulator of cell cycle progression. Inhibits the kinase activity of CDK2 bound to cyclin A, but has little inhibitory activity on CDK2 bound to SPDYA. Involved in G1 arrest. Potent inhibitor of cyclin E- and cyclin A-CDK2 complexes. Forms a complex with cyclin type D-CDK4 complexes and is involved in the assembly, stability, and modulation of CCND1-CDK4 complex activation. Acts either as an inhibitor or an activator of cyclin type D-CDK4 complexes depending on its phosphorylation state and/or stoichometry. This is Cyclin-dependent kinase inhibitor 1B (CDKN1B) from Cricetulus griseus (Chinese hamster).